Here is a 273-residue protein sequence, read N- to C-terminus: 4-hydroxy-tetrahydrodipicolinate reductase (273 aa).

Residues 8-13, D35, 103-105, and 129-132 contribute to the NAD(+) site; these read GALGRM, GTT, and SQNY. The active-site Proton donor/acceptor is the H161. A (S)-2,3,4,5-tetrahydrodipicolinate-binding site is contributed by H162. The Proton donor role is filled by K165. 171–172 serves as a coordination point for (S)-2,3,4,5-tetrahydrodipicolinate; sequence GT.

The protein belongs to the DapB family.

It localises to the cytoplasm. It carries out the reaction (S)-2,3,4,5-tetrahydrodipicolinate + NAD(+) + H2O = (2S,4S)-4-hydroxy-2,3,4,5-tetrahydrodipicolinate + NADH + H(+). The enzyme catalyses (S)-2,3,4,5-tetrahydrodipicolinate + NADP(+) + H2O = (2S,4S)-4-hydroxy-2,3,4,5-tetrahydrodipicolinate + NADPH + H(+). Its pathway is amino-acid biosynthesis; L-lysine biosynthesis via DAP pathway; (S)-tetrahydrodipicolinate from L-aspartate: step 4/4. In terms of biological role, catalyzes the conversion of 4-hydroxy-tetrahydrodipicolinate (HTPA) to tetrahydrodipicolinate. In Methanococcus aeolicus (strain ATCC BAA-1280 / DSM 17508 / OCM 812 / Nankai-3), this protein is 4-hydroxy-tetrahydrodipicolinate reductase.